We begin with the raw amino-acid sequence, 250 residues long: Probable ABC transporter permease protein BAB2_1148 (250 aa).

6 helical membrane passes run 12-32, 63-83, 94-114, 122-142, 172-192, and 211-231; these read LLSF…GAVV, VLSG…LMGW, WVQF…IVTL, IFVI…QGVI, VPFI…TVVA, and LYYD…LGLF. In terms of domain architecture, ABC transmembrane type-1 spans 56 to 236; sequence IFASLRRVLS…ILGLFMDRLL (181 aa).

It belongs to the binding-protein-dependent transport system permease family. In terms of assembly, the complex is composed of two ATP-binding proteins (BAB2_1147), two transmembrane proteins (BAB2_1148) and a solute-binding protein (BAB2_1146).

It localises to the cell inner membrane. In terms of biological role, probably part of an ABC transporter complex. Probably responsible for the translocation of the substrate across the membrane. This is Probable ABC transporter permease protein BAB2_1148 from Brucella abortus (strain 2308).